Here is a 637-residue protein sequence, read N- to C-terminus: tRNA uridine 5-carboxymethylaminomethyl modification enzyme MnmG (637 aa).

FAD is bound at residue 18 to 23 (GAGHAG). Position 281-295 (281-295 (GPRYCPSIEDKIVRF)) interacts with NAD(+).

Belongs to the MnmG family. In terms of assembly, homodimer. Heterotetramer of two MnmE and two MnmG subunits. It depends on FAD as a cofactor.

The protein localises to the cytoplasm. Functionally, NAD-binding protein involved in the addition of a carboxymethylaminomethyl (cmnm) group at the wobble position (U34) of certain tRNAs, forming tRNA-cmnm(5)s(2)U34. The chain is tRNA uridine 5-carboxymethylaminomethyl modification enzyme MnmG from Ligilactobacillus salivarius (strain UCC118) (Lactobacillus salivarius).